The sequence spans 405 residues: Phosphopentomutase (405 aa).

Mn(2+) is bound by residues Asp-10, Asp-305, His-310, Asp-346, His-347, and His-358.

Belongs to the phosphopentomutase family. Mn(2+) is required as a cofactor.

Its subcellular location is the cytoplasm. The enzyme catalyses 2-deoxy-alpha-D-ribose 1-phosphate = 2-deoxy-D-ribose 5-phosphate. It carries out the reaction alpha-D-ribose 1-phosphate = D-ribose 5-phosphate. The protein operates within carbohydrate degradation; 2-deoxy-D-ribose 1-phosphate degradation; D-glyceraldehyde 3-phosphate and acetaldehyde from 2-deoxy-alpha-D-ribose 1-phosphate: step 1/2. Functionally, isomerase that catalyzes the conversion of deoxy-ribose 1-phosphate (dRib-1-P) and ribose 1-phosphate (Rib-1-P) to deoxy-ribose 5-phosphate (dRib-5-P) and ribose 5-phosphate (Rib-5-P), respectively. In Methylorubrum extorquens (strain CM4 / NCIMB 13688) (Methylobacterium extorquens), this protein is Phosphopentomutase.